Consider the following 136-residue polypeptide: Organic hydroperoxide resistance protein OhrB (136 aa).

It belongs to the OsmC/Ohr family.

In terms of biological role, involved in organic hydroperoxide resistance. In Bacillus subtilis (strain 168), this protein is Organic hydroperoxide resistance protein OhrB (ohrB).